The following is a 232-amino-acid chain: 2-C-methyl-D-erythritol 4-phosphate cytidylyltransferase (232 aa).

Belongs to the IspD/TarI cytidylyltransferase family. IspD subfamily.

The catalysed reaction is 2-C-methyl-D-erythritol 4-phosphate + CTP + H(+) = 4-CDP-2-C-methyl-D-erythritol + diphosphate. Its pathway is isoprenoid biosynthesis; isopentenyl diphosphate biosynthesis via DXP pathway; isopentenyl diphosphate from 1-deoxy-D-xylulose 5-phosphate: step 2/6. In terms of biological role, catalyzes the formation of 4-diphosphocytidyl-2-C-methyl-D-erythritol from CTP and 2-C-methyl-D-erythritol 4-phosphate (MEP). In Stenotrophomonas maltophilia (strain K279a), this protein is 2-C-methyl-D-erythritol 4-phosphate cytidylyltransferase.